We begin with the raw amino-acid sequence, 374 residues long: Coiled-coil domain-containing protein 89 (374 aa).

The interval 1–40 (MRAPMLQKQQAPRMDTPPPEERLEKQNEKLNNQEEETEFK) is disordered. Position 16 is a phosphothreonine (Thr16). The segment covering 19–32 (PEERLEKQNEKLNN) has biased composition (basic and acidic residues). Positions 20-351 (EERLEKQNEK…DELRLQSEAF (332 aa)) form a coiled coil.

It belongs to the CCDC89 family. In terms of assembly, interacts with HEY1.

It is found in the cytoplasm. The protein localises to the nucleus. This is Coiled-coil domain-containing protein 89 (CCDC89) from Homo sapiens (Human).